A 359-amino-acid polypeptide reads, in one-letter code: Phospho-N-acetylmuramoyl-pentapeptide-transferase (359 aa).

10 helical membrane passes run 3 to 23 (QIMI…PALI), 55 to 75 (VAIL…GLAF), 80 to 100 (ITAS…VGFL), 117 to 137 (TAKT…VLQF), 156 to 176 (IATV…VVSA), 187 to 207 (LDGL…LITF), 231 to 251 (LALI…WNAA), 255 to 275 (IFMG…LSVT), 280 to 300 (ILAV…VLQI), and 334 to 354 (FWLL…GEWL).

The protein belongs to the glycosyltransferase 4 family. MraY subfamily. Requires Mg(2+) as cofactor.

The protein resides in the cell membrane. The catalysed reaction is UDP-N-acetyl-alpha-D-muramoyl-L-alanyl-gamma-D-glutamyl-meso-2,6-diaminopimeloyl-D-alanyl-D-alanine + di-trans,octa-cis-undecaprenyl phosphate = di-trans,octa-cis-undecaprenyl diphospho-N-acetyl-alpha-D-muramoyl-L-alanyl-D-glutamyl-meso-2,6-diaminopimeloyl-D-alanyl-D-alanine + UMP. It functions in the pathway cell wall biogenesis; peptidoglycan biosynthesis. Catalyzes the initial step of the lipid cycle reactions in the biosynthesis of the cell wall peptidoglycan: transfers peptidoglycan precursor phospho-MurNAc-pentapeptide from UDP-MurNAc-pentapeptide onto the lipid carrier undecaprenyl phosphate, yielding undecaprenyl-pyrophosphoryl-MurNAc-pentapeptide, known as lipid I. The polypeptide is Phospho-N-acetylmuramoyl-pentapeptide-transferase (Mycobacterium ulcerans (strain Agy99)).